A 143-amino-acid chain; its full sequence is Small ribosomal subunit protein uS9A (143 aa).

Position 2 is an N-acetylserine (serine 2). Lysine 30 participates in a covalent cross-link: Glycyl lysine isopeptide (Lys-Gly) (interchain with G-Cter in ubiquitin). Position 34 is a phosphoserine (serine 34). Residues lysine 47 and lysine 59 each participate in a glycyl lysine isopeptide (Lys-Gly) (interchain with G-Cter in ubiquitin) cross-link. Position 61 is a phosphoserine (serine 61). A Phosphothreonine modification is found at threonine 70. Serine 76 is modified (phosphoserine). The disordered stretch occupies residues 123 to 143; sequence RPEPKKFGGKGARSRFQKSYR. Residues 134-143 are compositionally biased toward basic residues; sequence ARSRFQKSYR.

The protein belongs to the universal ribosomal protein uS9 family. As to quaternary structure, component of the small ribosomal subunit (SSU). Mature yeast ribosomes consist of a small (40S) and a large (60S) subunit. The 40S small subunit contains 1 molecule of ribosomal RNA (18S rRNA) and 33 different proteins (encoded by 57 genes). The large 60S subunit contains 3 rRNA molecules (25S, 5.8S and 5S rRNA) and 46 different proteins (encoded by 81 genes).

The protein resides in the cytoplasm. In terms of biological role, component of the ribosome, a large ribonucleoprotein complex responsible for the synthesis of proteins in the cell. The small ribosomal subunit (SSU) binds messenger RNAs (mRNAs) and translates the encoded message by selecting cognate aminoacyl-transfer RNA (tRNA) molecules. The large subunit (LSU) contains the ribosomal catalytic site termed the peptidyl transferase center (PTC), which catalyzes the formation of peptide bonds, thereby polymerizing the amino acids delivered by tRNAs into a polypeptide chain. The nascent polypeptides leave the ribosome through a tunnel in the LSU and interact with protein factors that function in enzymatic processing, targeting, and the membrane insertion of nascent chains at the exit of the ribosomal tunnel. The sequence is that of Small ribosomal subunit protein uS9A from Saccharomyces cerevisiae (strain ATCC 204508 / S288c) (Baker's yeast).